The sequence spans 562 residues: O-fucosyltransferase 4 (562 aa).

The disordered stretch occupies residues 10–46 (SIQNRLPGSDHTTPSPPTSPHLCRSRSKSSSVSGQQQ). The span at 37 to 46 (KSSSVSGQQQ) shows a compositional bias: low complexity. The helical; Signal-anchor for type II membrane protein transmembrane segment at 67–87 (GILLFAPIIYISCMLFHLHAA) threads the bilayer. N-linked (GlcNAc...) asparagine glycosylation is found at N122, N146, N185, and N239. 332–334 (HLR) lines the substrate pocket. Residues N404, N420, N450, and N555 are each glycosylated (N-linked (GlcNAc...) asparagine).

This sequence belongs to the glycosyltransferase GT106 family.

It localises to the membrane. Its pathway is glycan metabolism. This chain is O-fucosyltransferase 4, found in Arabidopsis thaliana (Mouse-ear cress).